A 107-amino-acid chain; its full sequence is Small ribosomal subunit protein bS16 (107 aa).

Residues 85 to 107 form a disordered region; that stretch reads REARNNPEKAVPRKERKAAEAGK.

Belongs to the bacterial ribosomal protein bS16 family.

In Rhodopseudomonas palustris (strain BisB5), this protein is Small ribosomal subunit protein bS16.